The primary structure comprises 131 residues: Small ribosomal subunit protein uS11 (131 aa).

The protein belongs to the universal ribosomal protein uS11 family. As to quaternary structure, part of the 30S ribosomal subunit. Interacts with proteins S7 and S18. Binds to IF-3.

Located on the platform of the 30S subunit, it bridges several disparate RNA helices of the 16S rRNA. Forms part of the Shine-Dalgarno cleft in the 70S ribosome. The sequence is that of Small ribosomal subunit protein uS11 from Helicobacter pylori (strain ATCC 700392 / 26695) (Campylobacter pylori).